The sequence spans 152 residues: ARL14 effector protein-like (152 aa).

Residues 1 to 21 (MNEQSEKNNSIQERHTDHSFP) form a disordered region.

This chain is ARL14 effector protein-like (ARL14EPL), found in Homo sapiens (Human).